A 163-amino-acid chain; its full sequence is uncharacterized protein (163 aa).

Over residues 1–10 (MGVPRAREGR) the composition is skewed to basic and acidic residues. The tract at residues 1 to 163 (MGVPRAREGR…WSFTPLRWGS (163 aa)) is disordered.

This is an uncharacterized protein from Homo sapiens (Human).